The following is a 198-amino-acid chain: MSISLLGRIVSQQFSGIRAAEPGRSLYLPFTLLLKQPGAYKVSLHRYVHSTQTKSHLSFLMNNNDITPFQKFTVKVLKEQCKSRGLKLSGRKSDLLQRLITHDSCSNKKSSVKINEPKKKRILINDPIKITKKLVSDKTFRTIEKNISSLQNTPVIETPCDVHSHLQPRDRIFLLGFFMLSCLWWNLEPQESKPTIDH.

Residues 1–55 constitute a mitochondrion transit peptide; the sequence is MSISLLGRIVSQQFSGIRAAEPGRSLYLPFTLLLKQPGAYKVSLHRYVHSTQTKS. The 35-residue stretch at 69-103 folds into the SAP domain; it reads FQKFTVKVLKEQCKSRGLKLSGRKSDLLQRLITHD. The helical transmembrane segment at 172-187 threads the bilayer; it reads IFLLGFFMLSCLWWNL.

The protein belongs to the AIM34 family.

Its subcellular location is the mitochondrion membrane. This Saccharomyces cerevisiae (strain YJM789) (Baker's yeast) protein is Altered inheritance of mitochondria protein 34, mitochondrial (AIM34).